We begin with the raw amino-acid sequence, 177 residues long: MSEFVTVARPYAKAAFDFAVEHNSVERWQDMLAFAAEVTKNDQMAELLSGALAPETLSEAFIAICGEQLDENGQNLIKVMAENNRLKVLPDVLEQFIHLRAASEAIAEVEVISANQLSDEQLARIVSAMEKRLSRKVKLNCKIDKSVMAGIIIRAGDMVIDGSVRGRLDRLADVLQS.

The protein belongs to the ATPase delta chain family. As to quaternary structure, F-type ATPases have 2 components, F(1) - the catalytic core - and F(0) - the membrane proton channel. F(1) has five subunits: alpha(3), beta(3), gamma(1), delta(1), epsilon(1). F(0) has three main subunits: a(1), b(2) and c(10-14). The alpha and beta chains form an alternating ring which encloses part of the gamma chain. F(1) is attached to F(0) by a central stalk formed by the gamma and epsilon chains, while a peripheral stalk is formed by the delta and b chains.

The protein resides in the cell inner membrane. Its function is as follows. F(1)F(0) ATP synthase produces ATP from ADP in the presence of a proton or sodium gradient. F-type ATPases consist of two structural domains, F(1) containing the extramembraneous catalytic core and F(0) containing the membrane proton channel, linked together by a central stalk and a peripheral stalk. During catalysis, ATP synthesis in the catalytic domain of F(1) is coupled via a rotary mechanism of the central stalk subunits to proton translocation. Functionally, this protein is part of the stalk that links CF(0) to CF(1). It either transmits conformational changes from CF(0) to CF(1) or is implicated in proton conduction. This Klebsiella pneumoniae (strain 342) protein is ATP synthase subunit delta.